Here is a 314-residue protein sequence, read N- to C-terminus: Malate dehydrogenase (314 aa).

NAD(+) is bound by residues 12 to 17 (GSGFTG) and Asp36. Substrate is bound by residues Arg87 and Arg93. NAD(+) contacts are provided by residues Asn100 and 123–125 (LTN). Asn125 contributes to the substrate binding site. A Phosphoserine modification is found at Ser149. Arg156 contributes to the substrate binding site. Catalysis depends on His180, which acts as the Proton acceptor.

Belongs to the LDH/MDH superfamily. MDH type 3 family.

The catalysed reaction is (S)-malate + NAD(+) = oxaloacetate + NADH + H(+). Functionally, catalyzes the reversible oxidation of malate to oxaloacetate. The polypeptide is Malate dehydrogenase (Shouchella clausii (strain KSM-K16) (Alkalihalobacillus clausii)).